The primary structure comprises 305 residues: Probable 5-dehydro-4-deoxyglucarate dehydratase (305 aa).

Belongs to the DapA family.

The catalysed reaction is 5-dehydro-4-deoxy-D-glucarate + H(+) = 2,5-dioxopentanoate + CO2 + H2O. It functions in the pathway carbohydrate acid metabolism; D-glucarate degradation; 2,5-dioxopentanoate from D-glucarate: step 2/2. The chain is Probable 5-dehydro-4-deoxyglucarate dehydratase from Xanthomonas campestris pv. campestris (strain 8004).